The chain runs to 163 residues: COP9 signalosome complex subunit 9 (163 aa).

The PCI domain occupies 5-120 (EVLHAVLDPK…SVGRRIKVLR (116 aa)).

In terms of assembly, component of a COP9 signalosome-like (CSN) complex.

The protein localises to the cytoplasm. The protein resides in the nucleus. In terms of biological role, component of the COP9 signalosome (CSN) complex that acts as a regulator of the ubiquitin (Ubl) conjugation pathway by mediating the deneddylation of the cullin subunit of SCF-type E3 ubiquitin-protein ligase complexes. The complex is involved in the regulation of the mating pheromone response. This chain is COP9 signalosome complex subunit 9 (CSN9), found in Eremothecium gossypii (strain ATCC 10895 / CBS 109.51 / FGSC 9923 / NRRL Y-1056) (Yeast).